The sequence spans 89 residues: NAD(P)H-quinone oxidoreductase subunit L (89 aa).

2 consecutive transmembrane segments (helical) span residues 29 to 46 (VLGG…FYWM) and 59 to 79 (LFIY…APFL).

This sequence belongs to the complex I NdhL subunit family. As to quaternary structure, NDH-1 can be composed of about 15 different subunits; different subcomplexes with different compositions have been identified which probably have different functions.

It localises to the cellular thylakoid membrane. It catalyses the reaction a plastoquinone + NADH + (n+1) H(+)(in) = a plastoquinol + NAD(+) + n H(+)(out). The enzyme catalyses a plastoquinone + NADPH + (n+1) H(+)(in) = a plastoquinol + NADP(+) + n H(+)(out). Its function is as follows. NDH-1 shuttles electrons from an unknown electron donor, via FMN and iron-sulfur (Fe-S) centers, to quinones in the respiratory and/or the photosynthetic chain. The immediate electron acceptor for the enzyme in this species is believed to be plastoquinone. Couples the redox reaction to proton translocation, and thus conserves the redox energy in a proton gradient. Cyanobacterial NDH-1 also plays a role in inorganic carbon-concentration. The protein is NAD(P)H-quinone oxidoreductase subunit L of Prochlorococcus marinus (strain NATL1A).